The primary structure comprises 519 residues: MSASSSSALPPLVPALYRWKSTGSSGRQVQRRCVGAEAIVGLEEKNRRALYDLYIATSLRNIAPASTLLTLQNLKEMFELALLDARFEHPECACTVSWDDEVPAIITYESPESNESARDWARGCIHVQPTAKSALDLWSEMEEGRAAANDNTPSKSIELFLLSDVSTDSTPIPQDATVEILFHSNHLFWDGIGCRKFVGDLFRLVGSYIGRSDSREMKKIQWGQEIKNLSPPVVDSLKLDINTLGSEFDDKCTEYTSALVANYKSRGMKFQPGLALPRCVIHKLSADESIAIVKAVKTRLGPGFTISHLTQAAIVLALLDHLKPNDLSDDEVFISPTSVDGRRWLREDIASNFYAMCQTAAVVRIENLKSIAVSHKDEKELQVRALESACRNIKKSYRQWLENPFLQALGLRVHNFEASYLHAKPIPFEGEANPLFISDGINERFIPHEIKQTATGENVLSVESIDFVVNQSLPYLAIRLDSWRDASTLNIIYNDANYTEAEVQKYLQSIVEFMLAFRL.

His-414 contributes to the 15-deacetylcalonectrin binding site.

Belongs to the trichothecene O-acetyltransferase family.

Its pathway is sesquiterpene biosynthesis; trichothecene biosynthesis. 15-O-acetyltransferase; part of the core gene cluster that mediates the biosynthesis of trichothecenes, a very large family of chemically related bicyclic sesquiterpene compounds acting as mycotoxins, including T2-toxin. The biosynthesis of trichothecenes begins with the cyclization of farnesyl diphosphate to trichodiene and is catalyzed by the trichodiene synthase TRI5. Trichodiene undergoes a series of oxygenations catalyzed by the cytochrome P450 monooxygenase TRI4. TRI4 controls the addition of four oxygens at C-2, C-3, C-11, and the C-12, C-13-epoxide to form the intermediate isotrichotriol. Isotrichotriol then undergoes a non-enzymatic isomerization and cyclization to form isotrichodermol. During this process, the oxygen at the C-2 position becomes the pyran ring oxygen and the hydroxyl group at C-11 is lost. More complex type A trichothecenes are built by modifying isotrichodermol through a series of paired hydroxylation and acetylation or acylation steps. Isotrichodermol is converted to isotrichodermin by the acetyltransferase TRI101. TRI101 encodes a C-3 transacetylase that acts as a self-protection or resistance factor during biosynthesis and that the presence of a free C-3 hydroxyl group is a key component of Fusarium trichothecene phytotoxicity. A second hydroxyl group is added to C-15 by the trichothecene C-15 hydroxylase TRI11, producing 15-decalonectrin, which is then acetylated by TRI3, producing calonectrin. A third hydroxyl group is added at C-4 by the cytochrome P450 monooxygenase TRI13, converting calonectrin to 3,15-diacetoxyspirpenol, which is subsequently acetylated by the acetyltransferase TRI7. A fourth hydroxyl group is added to C-8 by the cytochrome P450 monooxygenase TRI1, followed by the addition of an isovaleryl moiety by TRI16. Finally, the acetyl group is removed from the C-3 position by the trichothecene C-3 esterase TRI8 to produce T-2 toxin. This Fusarium sporotrichioides protein is Trichothecene 15-O-acetyltransferase TRI3.